We begin with the raw amino-acid sequence, 128 residues long: MAATMETDEQQRIRFQLELEFVQCLANPNYLNFLAQRGYFKDKPFVNYMKYLLYWKEPEYAKYLKYPQCLHMLELLQYEHFRKELVNAQCAKFIDEQQILHWQHYSRKRVRLQQALAEQQQQNNTSGK.

It belongs to the Mediator complex subunit 31 family. Component of the Mediator complex.

It localises to the nucleus. In terms of biological role, component of the Mediator complex, a coactivator involved in the regulated transcription of nearly all RNA polymerase II-dependent genes. Mediator functions as a bridge to convey information from gene-specific regulatory proteins to the basal RNA polymerase II transcription machinery. Mediator is recruited to promoters by direct interactions with regulatory proteins and serves as a scaffold for the assembly of a functional preinitiation complex with RNA polymerase II and the general transcription factors. This chain is Mediator of RNA polymerase II transcription subunit 31-A (med31-a), found in Xenopus laevis (African clawed frog).